The following is a 400-amino-acid chain: MSLWTVLLAAGSGTRLAQASGGVKKQFLSVGGRPLYWKALTAFAKSPDVAGVVVVFAPEDLAEATRELAGFLDANHPGLPVLTAAGGARRQDSVKNGLDALPREARLVLIHDAARPFVDAGLIARVADALAAGRKAVIPTLPVTDTVKQVDGDRVTATLPRHELAAVQTPQGFDLTLLRQAYAHARPDFDVTDDASLVEHYGQPVFTVPGAPRNMKITHPEDLASLAEAAAPPVPVTGYGYDVHRYADPRNPGKQPPRPMKLGGFPILGAPEVLAHSDGDVLLHALTDAVLGCVAGGDIGRLFPDSNPDFDNMASGVFLSEALLAAKAKGLTITHVDLTIIAQIPKISPHAEAIRLNVAALLGLNKEQVNLKATTEEGLGFTGEKKGIKAVALVSGWRRP.

The interval 1 to 235 (MSLWTVLLAA…LAEAAAPPVP (235 aa)) is 2-C-methyl-D-erythritol 4-phosphate cytidylyltransferase. Positions 236-400 (VTGYGYDVHR…VALVSGWRRP (165 aa)) are 2-C-methyl-D-erythritol 2,4-cyclodiphosphate synthase. Residues aspartate 242 and histidine 244 each contribute to the a divalent metal cation site. Residues 242 to 244 (DVH) and 276 to 277 (HS) each bind 4-CDP-2-C-methyl-D-erythritol 2-phosphate. Position 284 (histidine 284) interacts with a divalent metal cation. 4-CDP-2-C-methyl-D-erythritol 2-phosphate is bound by residues 298 to 300 (DIG), 303 to 307 (FPDSN), 374 to 377 (TTEE), and phenylalanine 381.

In the N-terminal section; belongs to the IspD/TarI cytidylyltransferase family. IspD subfamily. It in the C-terminal section; belongs to the IspF family. The cofactor is a divalent metal cation.

It carries out the reaction 2-C-methyl-D-erythritol 4-phosphate + CTP + H(+) = 4-CDP-2-C-methyl-D-erythritol + diphosphate. The enzyme catalyses 4-CDP-2-C-methyl-D-erythritol 2-phosphate = 2-C-methyl-D-erythritol 2,4-cyclic diphosphate + CMP. Its pathway is isoprenoid biosynthesis; isopentenyl diphosphate biosynthesis via DXP pathway; isopentenyl diphosphate from 1-deoxy-D-xylulose 5-phosphate: step 2/6. The protein operates within isoprenoid biosynthesis; isopentenyl diphosphate biosynthesis via DXP pathway; isopentenyl diphosphate from 1-deoxy-D-xylulose 5-phosphate: step 4/6. Bifunctional enzyme that catalyzes the formation of 4-diphosphocytidyl-2-C-methyl-D-erythritol from CTP and 2-C-methyl-D-erythritol 4-phosphate (MEP) (IspD), and catalyzes the conversion of 4-diphosphocytidyl-2-C-methyl-D-erythritol 2-phosphate (CDP-ME2P) to 2-C-methyl-D-erythritol 2,4-cyclodiphosphate (ME-CPP) with a corresponding release of cytidine 5-monophosphate (CMP) (IspF). This is Bifunctional enzyme IspD/IspF from Solidesulfovibrio magneticus (strain ATCC 700980 / DSM 13731 / RS-1) (Desulfovibrio magneticus).